The chain runs to 112 residues: High mobility group protein D (112 aa).

A DNA-binding region (HMG box) is located at residues 5-71; it reads PKRPLSAYML…DYDRAVKEFE (67 aa). Ser10 is subject to Phosphoserine. The residue at position 12 (Tyr12) is a Phosphotyrosine. The disordered stretch occupies residues 72-112; sequence ANGGSSAANGGGAKKRAKPAKKVAKKSKKEESDEDDDDESE. The span at 84-98 shows a compositional bias: basic residues; the sequence is AKKRAKPAKKVAKKS. Phosphoserine is present on residues Ser103 and Ser111. The span at 103 to 112 shows a compositional bias: acidic residues; it reads SDEDDDDESE.

This sequence belongs to the HMGB family.

The protein localises to the nucleus. It localises to the chromosome. Binds preferentially single-stranded DNA and unwinds double-stranded DNA. Prefers sites containing the sequence 5'-ttg-3'. Facilitates DNA bending. Associated with early embryonic chromatin in the absence of histone H1. This chain is High mobility group protein D (HmgD), found in Drosophila melanogaster (Fruit fly).